The primary structure comprises 267 residues: Undecaprenyl-diphosphatase (267 aa).

8 helical membrane passes run Met1 to Ile21, Gln39 to Phe59, Ser83 to Phe103, Leu111 to Val131, Ala149 to Ile169, Phe189 to Met209, Leu218 to Leu238, and Met246 to Leu266.

This sequence belongs to the UppP family.

It localises to the cell inner membrane. It carries out the reaction di-trans,octa-cis-undecaprenyl diphosphate + H2O = di-trans,octa-cis-undecaprenyl phosphate + phosphate + H(+). Its function is as follows. Catalyzes the dephosphorylation of undecaprenyl diphosphate (UPP). Confers resistance to bacitracin. The sequence is that of Undecaprenyl-diphosphatase from Aliivibrio fischeri (strain ATCC 700601 / ES114) (Vibrio fischeri).